We begin with the raw amino-acid sequence, 312 residues long: Ribose-phosphate pyrophosphokinase (312 aa).

Residues 38-40 and 97-98 contribute to the ATP site; these read DGE and RQ. Residues H131 and D170 each contribute to the Mg(2+) site. Residue K193 is part of the active site. Residues R195, D219, and 223–227 contribute to the D-ribose 5-phosphate site; that span reads DTAGT.

This sequence belongs to the ribose-phosphate pyrophosphokinase family. Class I subfamily. As to quaternary structure, homohexamer. Requires Mg(2+) as cofactor.

The protein resides in the cytoplasm. It carries out the reaction D-ribose 5-phosphate + ATP = 5-phospho-alpha-D-ribose 1-diphosphate + AMP + H(+). It participates in metabolic intermediate biosynthesis; 5-phospho-alpha-D-ribose 1-diphosphate biosynthesis; 5-phospho-alpha-D-ribose 1-diphosphate from D-ribose 5-phosphate (route I): step 1/1. Involved in the biosynthesis of the central metabolite phospho-alpha-D-ribosyl-1-pyrophosphate (PRPP) via the transfer of pyrophosphoryl group from ATP to 1-hydroxyl of ribose-5-phosphate (Rib-5-P). The chain is Ribose-phosphate pyrophosphokinase from Leptospira interrogans serogroup Icterohaemorrhagiae serovar copenhageni (strain Fiocruz L1-130).